A 400-amino-acid chain; its full sequence is S-adenosylmethionine synthase (400 aa).

Position 136–141 (136–141 (GQGSVD)) interacts with ATP.

Belongs to the AdoMet synthase 2 family. Mg(2+) serves as cofactor.

The enzyme catalyses L-methionine + ATP + H2O = S-adenosyl-L-methionine + phosphate + diphosphate. The protein operates within amino-acid biosynthesis; S-adenosyl-L-methionine biosynthesis; S-adenosyl-L-methionine from L-methionine: step 1/1. In terms of biological role, catalyzes the formation of S-adenosylmethionine from methionine and ATP. The chain is S-adenosylmethionine synthase from Thermoplasma volcanium (strain ATCC 51530 / DSM 4299 / JCM 9571 / NBRC 15438 / GSS1).